The chain runs to 222 residues: Deoxyribose-phosphate aldolase (222 aa).

The active-site Proton donor/acceptor is Asp-90. Lys-152 (schiff-base intermediate with acetaldehyde) is an active-site residue. Lys-181 acts as the Proton donor/acceptor in catalysis.

It belongs to the DeoC/FbaB aldolase family. DeoC type 1 subfamily.

It is found in the cytoplasm. The catalysed reaction is 2-deoxy-D-ribose 5-phosphate = D-glyceraldehyde 3-phosphate + acetaldehyde. It functions in the pathway carbohydrate degradation; 2-deoxy-D-ribose 1-phosphate degradation; D-glyceraldehyde 3-phosphate and acetaldehyde from 2-deoxy-alpha-D-ribose 1-phosphate: step 2/2. Functionally, catalyzes a reversible aldol reaction between acetaldehyde and D-glyceraldehyde 3-phosphate to generate 2-deoxy-D-ribose 5-phosphate. The polypeptide is Deoxyribose-phosphate aldolase (Pectobacterium atrosepticum (strain SCRI 1043 / ATCC BAA-672) (Erwinia carotovora subsp. atroseptica)).